The chain runs to 475 residues: Lactate utilization protein B (475 aa).

2 4Fe-4S ferredoxin-type domains span residues 304–334 and 353–382; these read GTEF…GHSY and YDDY…LHEL. [4Fe-4S] cluster contacts are provided by Cys313, Cys316, Cys319, Cys323, Cys366, Cys369, and Cys373.

Belongs to the LutB/YkgF family.

Functionally, is involved in L-lactate degradation and allows cells to grow with lactate as the sole carbon source. Has probably a role as an electron transporter during oxidation of L-lactate. In Geobacillus sp. (strain WCH70), this protein is Lactate utilization protein B.